The chain runs to 540 residues: Chaperonin GroEL 2/3 (540 aa).

ATP is bound by residues 30-33 (TLGP), lysine 51, 87-91 (DGTTT), glycine 415, 479-481 (NAA), and aspartate 495.

The protein belongs to the chaperonin (HSP60) family. Forms a cylinder of 14 subunits composed of two heptameric rings stacked back-to-back. Interacts with the co-chaperonin GroES.

Its subcellular location is the cytoplasm. It catalyses the reaction ATP + H2O + a folded polypeptide = ADP + phosphate + an unfolded polypeptide.. Together with its co-chaperonin GroES, plays an essential role in assisting protein folding. The GroEL-GroES system forms a nano-cage that allows encapsulation of the non-native substrate proteins and provides a physical environment optimized to promote and accelerate protein folding. This is Chaperonin GroEL 2/3 from Paraburkholderia xenovorans (strain LB400).